Consider the following 394-residue polypeptide: GDSL esterase/lipase At2g27360 (394 aa).

The N-terminal stretch at 1-24 (MASQDCHMLLSFFISTFLITVVTS) is a signal peptide. Serine 40 acts as the Nucleophile in catalysis. Residues asparagine 136 and asparagine 319 are each glycosylated (N-linked (GlcNAc...) asparagine). Residues aspartate 344 and histidine 347 contribute to the active site. 2 N-linked (GlcNAc...) asparagine glycosylation sites follow: asparagine 371 and asparagine 382.

This sequence belongs to the 'GDSL' lipolytic enzyme family.

Its subcellular location is the secreted. This chain is GDSL esterase/lipase At2g27360, found in Arabidopsis thaliana (Mouse-ear cress).